Reading from the N-terminus, the 318-residue chain is NADH-ubiquinone oxidoreductase chain 1 (318 aa).

9 helical membrane passes run 2–22 (FLMNILCLVIPILLAMAFLTL), 37–57 (PNIVGPYGLLQPIADAIKLFI), 69–89 (LMFTLAPTLAFTLALSLWIPM), 100–120 (LGVLFILALSSLAVYSILWSG), 136–156 (VAQTISYEVTLAIILLSVMMM), 171–191 (HMWLILPLWPLAMMWFISTLA), 231–251 (IIMMNALTATLFLGAFHNPLF), 253–273 (ELFTVNFITKTLILTAIFLWV), and 293–313 (FLPLTLALCMLHVSIPALSAG).

Belongs to the complex I subunit 1 family. As to quaternary structure, core subunit of respiratory chain NADH dehydrogenase (Complex I) which is composed of 45 different subunits.

The protein resides in the mitochondrion inner membrane. The catalysed reaction is a ubiquinone + NADH + 5 H(+)(in) = a ubiquinol + NAD(+) + 4 H(+)(out). In terms of biological role, core subunit of the mitochondrial membrane respiratory chain NADH dehydrogenase (Complex I) which catalyzes electron transfer from NADH through the respiratory chain, using ubiquinone as an electron acceptor. Essential for the catalytic activity and assembly of complex I. The chain is NADH-ubiquinone oxidoreductase chain 1 (MT-ND1) from Zaedyus pichiy (Pichi).